Reading from the N-terminus, the 206-residue chain is Guanylyl cyclase inhibitory protein (206 aa).

G2 carries N-myristoyl glycine lipidation. EF-hand domains follow at residues S31–G49, N51–G86, T87–M122, and T135–V170. Ca(2+) is bound by residues D64, N66, D68, E75, D100, D102, D104, and E111.

In terms of tissue distribution, retina; inner segments, somata and synaptic terminals of cone receptors.

Does not stimulate guanylyl cyclase (GC) when free calcium ion concentration is low, but inhibits GC when free calcium ions concentration is elevated. The protein is Guanylyl cyclase inhibitory protein (GCIP) of Lithobates pipiens (Northern leopard frog).